We begin with the raw amino-acid sequence, 218 residues long: Dehydration-responsive element-binding protein 1B (218 aa).

Positions methionine 1–arginine 26 are disordered. Residues valine 32–alanine 95 constitute a DNA-binding region (AP2/ERF). The interval serine 131–asparagine 151 is disordered. Acidic residues predominate over residues phenylalanine 141 to asparagine 151.

This sequence belongs to the AP2/ERF transcription factor family. ERF subfamily.

It localises to the nucleus. Functionally, transcriptional activator that binds specifically to the DNA sequence 5'-[AG]CCGAC-3'. Binding to the C-repeat/DRE element mediates high salinity- and dehydration-inducible transcription. Confers resistance to high salt, cold and drought stress. This Oryza sativa subsp. indica (Rice) protein is Dehydration-responsive element-binding protein 1B (DREB1B).